The sequence spans 117 residues: Ig heavy chain V region 1-72 (117 aa).

An N-terminal signal peptide occupies residues Met1 to Ser19. A framework-1 region spans residues Gln20 to Thr49. A disulfide bridge links Cys41 with Cys115. Residues Ser50–His54 are complementarity-determining-1. Residues Trp55 to Gly68 are framework-2. The complementarity-determining-2 stretch occupies residues Arg69–Ser85. Positions Lys86 to Arg117 are framework-3.

This Mus musculus (Mouse) protein is Ig heavy chain V region 1-72.